The primary structure comprises 375 residues: 4-hydroxy-3-methylbut-2-en-1-yl diphosphate synthase (flavodoxin) (375 aa).

Positions 275, 278, 310, and 317 each coordinate [4Fe-4S] cluster.

This sequence belongs to the IspG family. It depends on [4Fe-4S] cluster as a cofactor.

It catalyses the reaction (2E)-4-hydroxy-3-methylbut-2-enyl diphosphate + oxidized [flavodoxin] + H2O + 2 H(+) = 2-C-methyl-D-erythritol 2,4-cyclic diphosphate + reduced [flavodoxin]. Its pathway is isoprenoid biosynthesis; isopentenyl diphosphate biosynthesis via DXP pathway; isopentenyl diphosphate from 1-deoxy-D-xylulose 5-phosphate: step 5/6. Its function is as follows. Converts 2C-methyl-D-erythritol 2,4-cyclodiphosphate (ME-2,4cPP) into 1-hydroxy-2-methyl-2-(E)-butenyl 4-diphosphate. This chain is 4-hydroxy-3-methylbut-2-en-1-yl diphosphate synthase (flavodoxin), found in Ruegeria pomeroyi (strain ATCC 700808 / DSM 15171 / DSS-3) (Silicibacter pomeroyi).